A 251-amino-acid polypeptide reads, in one-letter code: Triosephosphate isomerase (251 aa).

Residue 9 to 11 (NWK) coordinates substrate. The Electrophile role is filled by histidine 94. Glutamate 166 (proton acceptor) is an active-site residue. Residues glycine 172, serine 211, and 232-233 (GG) each bind substrate.

This sequence belongs to the triosephosphate isomerase family. As to quaternary structure, homodimer.

It is found in the cytoplasm. It catalyses the reaction D-glyceraldehyde 3-phosphate = dihydroxyacetone phosphate. Its pathway is carbohydrate biosynthesis; gluconeogenesis. It functions in the pathway carbohydrate degradation; glycolysis; D-glyceraldehyde 3-phosphate from glycerone phosphate: step 1/1. In terms of biological role, involved in the gluconeogenesis. Catalyzes stereospecifically the conversion of dihydroxyacetone phosphate (DHAP) to D-glyceraldehyde-3-phosphate (G3P). The polypeptide is Triosephosphate isomerase (Xanthomonas campestris pv. campestris (strain 8004)).